A 1148-amino-acid chain; its full sequence is Small G protein signaling modulator 1 (1148 aa).

The 155-residue stretch at 36–190 folds into the RUN domain; sequence HEDSSHIISF…EYTKMKTADH (155 aa). Residues 256 to 297 are important for interaction with RAB9A and RAB9B; sequence LLYGKNNVLVQPRDDMEAVPGYLSLHQTADVMTLKWTPNQLM. The required for interaction with RAP family members stretch occupies residues 301-350; it reads VGDLDYEKSVYWDYAMTIRLEEIVYLHCHQQVDSGGTVVLVSQDGIQRPP. 3 disordered regions span residues 377–411, 700–830, and 871–894; these read DPPL…DKDD, DSTI…PREE, and GWRS…EEPE. Over residues 385-397 the composition is skewed to basic residues; sequence GKGKVFPKLRKRS. The Rab-GAP TBC domain maps to 617–1081; that stretch reads GIQPEIRKAV…LVWETIWAAK (465 aa). Residues 702-716 show a composition bias toward polar residues; that stretch reads TISNESSQSCSSGRQ. Residues 742–751 show a composition bias toward basic and acidic residues; that stretch reads AEGRLEEKQP. Polar residues predominate over residues 757–802; sequence NLVNGTCSPDSGHPSSHNFSSGLSEHSEPSLSTEDSVLDAQRNTPT. 2 stretches are compositionally biased toward basic and acidic residues: residues 805-816 and 871-883; these read RPRDGSVDDRQS and GWRS…HGQA. The span at 884–894 shows a compositional bias: acidic residues; it reads DSEDNLSEEPE.

It belongs to the RUTBC family. Interacts with RAB9A (GTP-bound form) and RAB9B (GTP-bound form); has much lower affinity for GDP-bound RAB9A and RAB9B. Interacts with RAB3A, RAB4A, RAB5A, RAB8A, RAB11A, RAP1A, RAP1B, RAP2A and RAP2B. No interaction with RAB27A. Mainly expressed in brain, heart and testis.

It is found in the golgi apparatus. Its subcellular location is the trans-Golgi network. The protein localises to the cytoplasmic vesicle membrane. The protein resides in the cytoplasm. Its function is as follows. Interacts with numerous Rab family members, functioning as Rab effector for some, and as GTPase activator for others. Promotes GTP hydrolysis by RAB34 and RAB36. Probably functions as a GTPase effector with RAB9A and RAB9B; does not stimulate GTP hydrolysis with RAB9A and RAB9B. This chain is Small G protein signaling modulator 1 (SGSM1), found in Homo sapiens (Human).